A 95-amino-acid chain; its full sequence is Small ribosomal subunit protein uS19 (95 aa).

The interval 75–95 (APTRSFRGHGGKKADKRGKMK) is disordered. Over residues 80 to 95 (FRGHGGKKADKRGKMK) the composition is skewed to basic residues.

The protein belongs to the universal ribosomal protein uS19 family.

In terms of biological role, protein S19 forms a complex with S13 that binds strongly to the 16S ribosomal RNA. This chain is Small ribosomal subunit protein uS19, found in Roseiflexus sp. (strain RS-1).